The following is a 112-amino-acid chain: Large ribosomal subunit protein eL30 (112 aa).

The protein belongs to the eukaryotic ribosomal protein eL30 family.

The protein is Large ribosomal subunit protein eL30 (RPL30) of Lupinus luteus (European yellow lupine).